Here is a 721-residue protein sequence, read N- to C-terminus: Peroxisomal fatty acid beta-oxidation multifunctional protein AIM1 (721 aa).

Glutamate 116 serves as the catalytic Nucleophile. The active-site Proton acceptor is glutamate 136. A Microbody targeting signal motif is present at residues 719–721 (SKL).

In the N-terminal section; belongs to the enoyl-CoA hydratase/isomerase family. The protein in the central section; belongs to the 3-hydroxyacyl-CoA dehydrogenase family. As to expression, widely expressed.

Its subcellular location is the peroxisome. It carries out the reaction a (3S)-3-hydroxyacyl-CoA = a (2E)-enoyl-CoA + H2O. It catalyses the reaction a 4-saturated-(3S)-3-hydroxyacyl-CoA = a (3E)-enoyl-CoA + H2O. The enzyme catalyses (3S)-3-hydroxybutanoyl-CoA = (2E)-butenoyl-CoA + H2O. The catalysed reaction is (3S)-hydroxyoctanoyl-CoA = (2E)-octenoyl-CoA + H2O. It carries out the reaction (3S)-3-hydroxydodecanoyl-CoA = (2E)-dodecenoyl-CoA + H2O. It catalyses the reaction (3S)-hydroxytetradecanoyl-CoA = (2E)-tetradecenoyl-CoA + H2O. The enzyme catalyses (3S)-hydroxyhexanoyl-CoA = (2E)-hexenoyl-CoA + H2O. The catalysed reaction is a (3Z)-enoyl-CoA = a 4-saturated (2E)-enoyl-CoA. It carries out the reaction a (3E)-enoyl-CoA = a 4-saturated (2E)-enoyl-CoA. It catalyses the reaction (3S)-3-hydroxybutanoyl-CoA = (3R)-3-hydroxybutanoyl-CoA. The enzyme catalyses a (3S)-3-hydroxyacyl-CoA + NAD(+) = a 3-oxoacyl-CoA + NADH + H(+). The catalysed reaction is (3S)-3-hydroxybutanoyl-CoA + NAD(+) = acetoacetyl-CoA + NADH + H(+). It carries out the reaction (3S)-hydroxyhexanoyl-CoA + NAD(+) = 3-oxohexanoyl-CoA + NADH + H(+). It catalyses the reaction (3S)-hydroxyoctanoyl-CoA + NAD(+) = 3-oxooctanoyl-CoA + NADH + H(+). The enzyme catalyses (3S)-3-hydroxydodecanoyl-CoA + NAD(+) = 3-oxododecanoyl-CoA + NADH + H(+). The catalysed reaction is (3S)-hydroxytetradecanoyl-CoA + NAD(+) = 3-oxotetradecanoyl-CoA + NADH + H(+). The protein operates within lipid metabolism; fatty acid beta-oxidation. Involved in peroxisomal fatty acid beta-oxidation. Required for wound-induced jasmonate biosynthesis. Possesses enoyl-CoA hydratase activity against short chain substrates (C4-C6) and 3-hydroxyacyl-CoA dehydrogenase activity against chains of variable sizes (C6-C16). Possesses cinnamoyl-CoA hydratase activity and is involved in the peroxisomal beta-oxidation pathway for the biosynthesis of benzoic acid (BA). Required for the accumulation in seeds of benzoylated glucosinolates (BGs) and substituted hydroxybenzoylated choline esters, which are BA-containing secondary metabolites. Required for salicylic acid (SA) in seeds. The chain is Peroxisomal fatty acid beta-oxidation multifunctional protein AIM1 (AIM1) from Arabidopsis thaliana (Mouse-ear cress).